The following is an 89-amino-acid chain: Small ribosomal subunit protein uS15 (89 aa).

The protein belongs to the universal ribosomal protein uS15 family. Part of the 30S ribosomal subunit. Forms a bridge to the 50S subunit in the 70S ribosome, contacting the 23S rRNA.

Functionally, one of the primary rRNA binding proteins, it binds directly to 16S rRNA where it helps nucleate assembly of the platform of the 30S subunit by binding and bridging several RNA helices of the 16S rRNA. Its function is as follows. Forms an intersubunit bridge (bridge B4) with the 23S rRNA of the 50S subunit in the ribosome. The protein is Small ribosomal subunit protein uS15 of Herminiimonas arsenicoxydans.